A 383-amino-acid chain; its full sequence is Delta(12)-fatty-acid desaturase (383 aa).

Positions 1–24 (MGAGGRMPVPTSSKKSETDTTKRV) are disordered. The segment covering 14-24 (KKSETDTTKRV) has biased composition (basic and acidic residues). A helical transmembrane segment spans residues 56–76 (LISDIIIASCFYYVATNYFSL). Positions 105–109 (HECGH) match the Histidine box-1 motif. Residues 117–137 (WLDDTVGLIFHSFLLVPYFSW) form a helical membrane-spanning segment. Residues 141–145 (HRRHH) carry the Histidine box-2 motif. 3 consecutive transmembrane segments (helical) span residues 179–199 (IMMLTVQFVLGWPLYLAFNVS), 225–245 (IYLSDAGILAVCFGLYRYAAA), and 252–272 (ICLYGVPLLIVNAFLVLITYL). The short motif at 315 to 319 (HVAHH) is the Histidine box-3 element.

It belongs to the fatty acid desaturase type 1 family. As to quaternary structure, homo- and heterodimer. Interacts with FAD3 but not with FAD6. FAD2-FAD3 heterodimers can form a metabolic channel in which 18:1-PC is converted to 18:3-PC without releasing a free 18:2-PC intermediate. In terms of tissue distribution, expressed in shoots and roots. Expressed in leaves, stems, flowers and siliques.

The protein localises to the endoplasmic reticulum membrane. It is found in the microsome membrane. The enzyme catalyses (9Z)-octadecenoyl-CoA + 2 Fe(II)-[cytochrome b5] + O2 + 2 H(+) = (9Z,12Z)-octadecadienoyl-CoA + 2 Fe(III)-[cytochrome b5] + 2 H2O. The catalysed reaction is (9Z)-hexadecenoyl-CoA + 2 Fe(II)-[cytochrome b5] + O2 + 2 H(+) = (9Z,12Z)-hexadecadienoyl-CoA + 2 Fe(III)-[cytochrome b5] + 2 H2O. It carries out the reaction a (9Z)-octadecenoyl-containing glycerolipid + 2 Fe(II)-[cytochrome b5] + O2 + 2 H(+) = a (9Z,12Z)-octadecadienoyl-containing glycerolipid + 2 Fe(III)-[cytochrome b5] + 2 H2O. It catalyses the reaction (9Z)-octadecenoyl-CoA + AH2 + O2 = (9Z,12Z)-octadecadienoyl-CoA + A + 2 H2O. The enzyme catalyses (9Z)-hexadecenoyl-CoA + AH2 + O2 = (9Z,12Z)-hexadecadienoyl-CoA + A + 2 H2O. The catalysed reaction is (9Z)-tetradecenoyl-CoA + 2 Fe(II)-[cytochrome b5] + O2 + 2 H(+) = (9Z,12Z)-tetradecadienoyl-CoA + 2 Fe(III)-[cytochrome b5] + 2 H2O. It carries out the reaction (9Z)-pentadecenoyl-CoA + 2 Fe(II)-[cytochrome b5] + O2 + 2 H(+) = (9Z,12Z)-pentadecadienoyl-CoA + 2 Fe(III)-[cytochrome b5] + 2 H2O. It catalyses the reaction (9Z)-heptadecenoyl-CoA + 2 Fe(II)-[cytochrome b5] + O2 + 2 H(+) = (9Z,12Z)-heptadecadienoyl-CoA + 2 Fe(III)-[cytochrome b5] + 2 H2O. It functions in the pathway lipid metabolism; polyunsaturated fatty acid biosynthesis. ER (microsomal) omega-6 fatty acid desaturase introduces the second double bond in the biosynthesis of 18:3 fatty acids, important constituents of plant membranes. Delta(12)-desaturase with regioselectivity determined by the double bond (delta(9) position) and carboxyl group of the substrate. Can use both 16:1 and 18:1 fatty acids as substrates. It is thought to use cytochrome b5 as an electron donor and to act on fatty acids esterified to phosphatidylcholine (PC) and, possibly, other phospholipids. Very low constitutive hydroxylation activity. Required for desaturation of fatty acids present in extraplastidial membranes, including mitochondria. Required for salt tolerance during seed germination and early seedling growth. The chain is Delta(12)-fatty-acid desaturase from Arabidopsis thaliana (Mouse-ear cress).